The chain runs to 556 residues: Dihydroxy-acid dehydratase (556 aa).

C47 lines the [2Fe-2S] cluster pocket. D79 lines the Mg(2+) pocket. [2Fe-2S] cluster is bound at residue C120. Mg(2+)-binding residues include D121 and K122. The residue at position 122 (K122) is an N6-carboxylysine. A [2Fe-2S] cluster-binding site is contributed by C192. E444 is a binding site for Mg(2+). Catalysis depends on S470, which acts as the Proton acceptor.

Belongs to the IlvD/Edd family. As to quaternary structure, homodimer. It depends on [2Fe-2S] cluster as a cofactor. Requires Mg(2+) as cofactor.

The catalysed reaction is (2R)-2,3-dihydroxy-3-methylbutanoate = 3-methyl-2-oxobutanoate + H2O. The enzyme catalyses (2R,3R)-2,3-dihydroxy-3-methylpentanoate = (S)-3-methyl-2-oxopentanoate + H2O. Its pathway is amino-acid biosynthesis; L-isoleucine biosynthesis; L-isoleucine from 2-oxobutanoate: step 3/4. It participates in amino-acid biosynthesis; L-valine biosynthesis; L-valine from pyruvate: step 3/4. Its function is as follows. Functions in the biosynthesis of branched-chain amino acids. Catalyzes the dehydration of (2R,3R)-2,3-dihydroxy-3-methylpentanoate (2,3-dihydroxy-3-methylvalerate) into 2-oxo-3-methylpentanoate (2-oxo-3-methylvalerate) and of (2R)-2,3-dihydroxy-3-methylbutanoate (2,3-dihydroxyisovalerate) into 2-oxo-3-methylbutanoate (2-oxoisovalerate), the penultimate precursor to L-isoleucine and L-valine, respectively. The sequence is that of Dihydroxy-acid dehydratase from Prochlorococcus marinus (strain MIT 9211).